We begin with the raw amino-acid sequence, 115 residues long: NAD(P)H-quinone oxidoreductase subunit M (115 aa).

The protein belongs to the complex I NdhM subunit family. As to quaternary structure, NDH-1 can be composed of about 15 different subunits; different subcomplexes with different compositions have been identified which probably have different functions.

It localises to the cellular thylakoid membrane. It catalyses the reaction a plastoquinone + NADH + (n+1) H(+)(in) = a plastoquinol + NAD(+) + n H(+)(out). The catalysed reaction is a plastoquinone + NADPH + (n+1) H(+)(in) = a plastoquinol + NADP(+) + n H(+)(out). In terms of biological role, NDH-1 shuttles electrons from an unknown electron donor, via FMN and iron-sulfur (Fe-S) centers, to quinones in the respiratory and/or the photosynthetic chain. The immediate electron acceptor for the enzyme in this species is believed to be plastoquinone. Couples the redox reaction to proton translocation, and thus conserves the redox energy in a proton gradient. Cyanobacterial NDH-1 also plays a role in inorganic carbon-concentration. The sequence is that of NAD(P)H-quinone oxidoreductase subunit M from Prochlorococcus marinus (strain MIT 9303).